A 196-amino-acid polypeptide reads, in one-letter code: MQFLTAVSPQSSSTPSWKIETKYSTRVLTGNWTEERRKFIKATEKTPQTIYRKEYVPFPGHRPDQISRWYSKRTVEGLPYKYLITHHQEPSQRYLISTYDDHYNRHNYHPGLPELRTWNRHKLLWLPEKADFPLLGPPTNYGLYEQLKQKWLPPPEATLRESIYTSSYPRPPAGAMSRREHAIPVPPPRLQPVPHF.

2 mn regions span residues 46–61 and 96–108; these read TPQT…FPGH and ISTY…RHNY. The tract at residues 168–196 is disordered; that stretch reads YPRPPAGAMSRREHAIPVPPPRLQPVPHF. Positions 184-196 are enriched in pro residues; it reads PVPPPRLQPVPHF.

As to quaternary structure, microtubule inner protein component of sperm flagellar doublet microtubules. In terms of tissue distribution, expressed in trachea multiciliated cells.

The protein resides in the cytoplasm. It localises to the cytoskeleton. It is found in the cilium axoneme. The protein localises to the flagellum axoneme. Its function is as follows. Microtubule inner protein (MIP) part of the dynein-decorated doublet microtubules (DMTs) in cilia axoneme, which is required for motile cilia beating. The chain is Cilia- and flagella-associated protein 107 from Bos taurus (Bovine).